Reading from the N-terminus, the 2107-residue chain is MLRVFILYAENVHTPDTDISDAYCSAVFAGVKKRTKVIKNNVNPVWNEGFEWDLKGIPLDQGSELLVVVKDHETMGRNRFLGEANIPLREVLATPSLSASFNAPLLDTKKQPTGASLVLQVSYTPLPGAVPTFPPLTPLEPSPTLPDMDTVADTGGEEDTEDQGLTGDEAEPFLDQSGALGPGAPSTPKKQPSHPPPYHPGGGRKRSAPAPSKPLSDKPQDFQIRVQVIKGRQLPGVNIKPVVKVTAAGQTKRTRIHKGNSPVFNETLFFNVFDSPAELFNEPIFITVVDSRSLRTDALIGEFRLDVGSIYREPRHAYLRKWLLLSDPDDFSAGARGYLKASLCVLGPGDEAPLERKDPSEDKEDIESNLLRPIGVALRGAHFCLKVFRAEDLPQMDDAVMDNVRQIFGFDSNKKNLVDPFVEVSFAGKMLCSKILEKTANPQWNQSITLPAMFPSMCEKMRIRVVDWDRLTHNDIVATTYLSMSKISASGGEIEEEPAGVVKPPPATELDDHLGFLPTFGPCYINLYGSPREFTGFPDPYAELNTGKGEGVAYRGRLLLSLETKLVERSEQKVEALSADDILRVEKYLRRRKYSLFAAFYSATMLQDVDDAVQFEVSIGNYGNKFDTTCLPLASTTQYSRAVFDGCHYYYLPWGNVKPVVVLSSYWEDIRHRVEAQNQLLRIADQLEAGLEQVHLALKAQCSDEDVDSLVAQLMDELIAGCSQPLGDVQEMPSATHLDQYLYQLRTRHLSQITEAAQALKLGHSELPAALEQAEDWLLRLRALADEPQNSLPDIVIWMLQGDKRVAYQRVPAHEVLFSRRGTSYCGKNCGKLQTIFLKYPMEGVPRARMPVQIRVRLWFGLSVDEKEFNQFAEGKLSVFAETYENQTKLALVGNWGTTGLTYPKFSDITGRIKLPKDSFRPSAGWAWAGDWFVCPEKTLLHDTDAGHLSFVEEVFENQTRLPGGQWIYMSDNYTDVNGEKVLPKDDIECPLGWKWEDEEWSTDLNRAVDEQGWEYSITIPPDRKPRHWVPAEKMYYTHRRRRWVRLRRRDLSQMEALKRHRQAEAEGEGWEYASLFGWKFHLEYRKTDAFRRRRWRRRMEPLEKTGPAAVFALEGALGGVVDDRSEDSVSVSTLSFGVNRPTISCIFDYGNRYHLRCYMYQARDLPAMDKDSFSDPYAVVSFLHQSQKTVVAKNTLNPTWDQTLIFYEIEIFGEPSSIAEQPPSIVVELYDHDTYGVDEFMGRCICQPSLERTPRLAWFPLTRGSQPAGELLASFELIQREKPAIHHIPGFEVQDTTGILEESEDTDLPYPPPQREANIYMVPQNIKPVLQRTAIEILAWGLRNMKSYQLASVSSPSLVVECGGQSVQSCVIKNLRKNPNFDICTLFMEVMLPREELYCPPIVVKVIDNRQFGRRPVVGQCTIRSLEGFLCDPYSEESPSPQGGPDDVSLLSPGEDVLIDIDDKEPLIPIQFADGLSGLAPTNMASSPSSLHKILLEEEFIDWWSKFFASIGESEKCGSYLEKDFDTLKVYDTSLENVKAFEGLSDFCNTFKLYRGKTQEETEDPSVIGEFKGLFKIYPLPEDPAIPLPPRQFHQLASQGPQECLVRVYIIRAFGLQPKDPNGKCDPYIKISIGKKSVSDQDSYIPCTLEPVFGKMFELTCTLPLEKDLKVTLYDYDLLSKDEKIGETVIDLENRLLSKFGARCGLPQTYCVSGPNQWRDQLRPSQLLHLFCQQHRVKAPVYRTDRVVFQDKEYTVEEIEAGRVPNPHLGPVEERLALHVLQQQGLIPEHVESRPLYSPLQPDIEQGKLQMWVDLFPKALGRPGPPFNITPRRARRFFLRCIIWNTKDVILDDLSITGEKMSDIYVKGWMVGFEEHKQKTDVHYRSLGGEGNFNWRFVFPFDYLPAEQVCTVSKKDAFWRLDKTESKIPARVVFQIWDNDKFSFDDFLGSLQLDLNHMPKPAKTAEKCSADQLEDTFHPERFVSLFEQKTVKGWWPCVAEEGEKKILAGKLEMTLEIVTESEHEERPAGHGRDEPNMNPKLEDPRRPDTSFLWFTSPYKTMKFILWRRFRCAIIFFLILFIFLLFLGIFVYSFPNYAAMKLVKPFS.

The region spanning 1 to 101 (MLRVFILYAE…LATPSLSASF (101 aa)) is the C2 1 domain. Ca(2+)-binding residues include Asp18, Ile19, Asp21, and Asn40. The span at 132–144 (TFPPLTPLEPSPT) shows a compositional bias: pro residues. The interval 132–221 (TFPPLTPLEP…SKPLSDKPQD (90 aa)) is disordered. Over residues 155 to 172 (GGEEDTEDQGLTGDEAEP) the composition is skewed to acidic residues. Thr166 carries the phosphothreonine modification. C2 domains follow at residues 205-323 (KRSA…RKWL), 362-498 (DKED…EEEP), 1138-1264 (GVNR…PLTR), 1312-1440 (PPPQ…EESP), 1588-1706 (PLPP…ARCG), and 1822-1970 (GRPG…EKCS). The Ca(2+) site is built by Asp411, Asp419, Asp467, Asp469, Asp475, Asp1170, Asp1176, Asp1232, and Asp1234. The Ca(2+) site is built by Asp1621, Asp1627, Asp1676, Asp1678, Asp1941, Ser1944, and Asp1947. The interval 2021-2044 (ESEHEERPAGHGRDEPNMNPKLED) is disordered. Residues 2074–2094 (IIFFLILFIFLLFLGIFVYSF) form a helical membrane-spanning segment.

The protein belongs to the ferlin family. Interacts with CACNA1S, CAV3 and PARVB. Interacts with ANXA1; the interaction is Ca(2+)- and injury state-dependent. Interacts with ANXA2; the interaction is Ca(2+)- and injury state-dependent. Interacts with AHNAK; the interaction is direct and Ca(2+)-independent. Interacts with AHNAK2; the interaction is direct and Ca(2+)-independent. Interacts with TRIM72/MG53; interaction is required for transport to sites of cell injury during repair patch formation. Interacts with RIPOR2; this interaction occurs during early myogenic differentiation. Ca(2+) is required as a cofactor.

The protein localises to the cell membrane. It is found in the sarcolemma. The protein resides in the cytoplasmic vesicle membrane. Key calcium ion sensor involved in the Ca(2+)-triggered synaptic vesicle-plasma membrane fusion. Plays a role in the sarcolemma repair mechanism of both skeletal muscle and cardiomyocytes that permits rapid resealing of membranes disrupted by mechanical stress. In Bos taurus (Bovine), this protein is Dysferlin (DYSF).